The following is a 494-amino-acid chain: MAPRCWHWWRWSAWSGLRPSPSRSTPTPGFCQKFSTQEKTPQICVVGSGPAGFYTAQHLLKHHTHAHVDIYEKQLVPFGLVRFGVAPDHPEVKNVINTFTQTARSDRCAFQGNVVVGRDVSVPELREAYHAVVLSYGAEDHQPLGIPGEELPGVVSARAFVGWYNGLPENQELAPDLSCDTAVILGQGNVALDVARILLTPPEHLEKTDITEAALGALRQSRVKTVWIVGRRGPLQVAFTIKELREMIQLPGTRPILDPSDFLGLQDRIKDVPRPRRRLTELLLRTATEKPGVEEAARQALASRAWGLRFFRSPQQVLPTPDGQRVAGIRLAVTSLEGVGESTRAVPTGDVEDLPCGLLLSSVGYKSRPIDPSVPFDPKLGVIPNTEGRVVNVPGLYCSGWVKRGPTGVITTTMTDSFLTSQALLEDLKAGLLPSGPRPGYVAIQALLSNRGVRPVSFSDWEKLDAEEVSRGQGTGKPREKLVDRREMLRLLGH.

The N-terminal 34 residues, 1 to 34 (MAPRCWHWWRWSAWSGLRPSPSRSTPTPGFCQKF), are a transit peptide targeting the mitochondrion. The FAD site is built by Ala-51, Glu-72, Leu-80, and Val-116. Residues 187-190 (QGNV), 231-232 (RR), and Glu-243 each bind NADP(+). Phosphoserine is present on Ser-313. Residues Trp-401 and 408–410 (GVI) each bind FAD. NADP(+) is bound at residue Gly-408.

It belongs to the ferredoxin--NADP reductase type 1 family. Monomer. Interacts directly with FDX1. FAD is required as a cofactor. Expressed in the adrenal, testis and ovary and to a lesser extent in the liver and kidney.

The protein resides in the mitochondrion inner membrane. It catalyses the reaction 2 reduced [adrenodoxin] + NADP(+) + H(+) = 2 oxidized [adrenodoxin] + NADPH. The catalysed reaction is 2 reduced [2Fe-2S]-[ferredoxin] + NADP(+) + H(+) = 2 oxidized [2Fe-2S]-[ferredoxin] + NADPH. Its pathway is steroid metabolism; cholesterol metabolism. Serves as the first electron transfer protein in all the mitochondrial P450 systems including cholesterol side chain cleavage in all steroidogenic tissues, steroid 11-beta hydroxylation in the adrenal cortex, 25-OH-vitamin D3-24 hydroxylation in the kidney, and sterol C-27 hydroxylation in the liver. Also acts as a ferredoxin--NADP(+) reductase essential for coenzyme Q biosynthesis: together with FDX2, transfers the electrons required for the hydroxylation reaction performed by COQ6. The chain is NADPH:adrenodoxin oxidoreductase, mitochondrial (Fdxr) from Mus musculus (Mouse).